The sequence spans 391 residues: Na(+)/H(+) antiporter NhaA (391 aa).

11 helical membrane-spanning segments follow: residues 14–34, 59–79, 95–115, 124–144, 154–174, 177–197, 213–233, 261–281, 292–312, 331–351, and 363–383; these read AGGI…NSPL, LIHW…GLEV, SLPT…YLIF, VGWA…MALL, VFLL…IAMF, TDLS…LVGL, LILW…GVII, FVIL…GMSL, IALG…FVAV, VAVM…LAFI, and LGIL…LSKV.

The protein belongs to the NhaA Na(+)/H(+) (TC 2.A.33) antiporter family.

It is found in the cell inner membrane. The enzyme catalyses Na(+)(in) + 2 H(+)(out) = Na(+)(out) + 2 H(+)(in). Its function is as follows. Na(+)/H(+) antiporter that extrudes sodium in exchange for external protons. This is Na(+)/H(+) antiporter NhaA from Shewanella loihica (strain ATCC BAA-1088 / PV-4).